Here is a 981-residue protein sequence, read N- to C-terminus: Ubiquitin carboxyl-terminal hydrolase 37 (981 aa).

The short motif at 32–34 (KEN) is the KEN box 1 element. 2 consecutive short sequence motifs (D-box) follow at residues 71–79 (RLMLTLQDN) and 96–105 (RLFLDAVHQN). Positions 111-308 (MKPSQGSGSF…SAKRSLGFLP (198 aa)) are disordered. The residue at position 114 (Ser114) is a Phosphoserine. Polar residues predominate over residues 135 to 148 (RQLSYSDNQASSKR). The span at 149-159 (GSLETKDDIPF) shows a compositional bias: basic and acidic residues. The D-box 3 motif lies at 160–168 (RKVLGNPGR). The residue at position 170 (Ser170) is a Phosphoserine. The span at 172–195 (KTATGSGITVTRTIPSLTSASTPL) shows a compositional bias: polar residues. Ser212 carries the post-translational modification Phosphoserine. The short motif at 223–225 (KEN) is the KEN box 2 element. Over residues 245-259 (SREKQLSLKQSEENR) the composition is skewed to basic and acidic residues. Residues 266-300 (LQSSSFYGSRTGSKDYSSGSTNLDRTNVSGQTPSA) show a composition bias toward polar residues. The USP domain maps to 343 to 953 (QGFSNLGNTC…SGYIFFYMHK (611 aa)). Residue Cys352 is the Nucleophile of the active site. Ser630 carries the post-translational modification Phosphoserine; by CDK2. 2 positions are modified to phosphoserine: Ser652 and Ser654. Disordered regions lie at residues 673–704 (GCEQ…GFDG) and 719–831 (KREA…EQKE). Composition is skewed to basic and acidic residues over residues 683-697 (KDSK…KSEL) and 719-734 (KREA…DDKP). The region spanning 706 to 725 (SEEELLAAVLEMSKREASPT) is the UIM 1 domain. A Phosphoserine modification is found at Ser772. Positions 776–788 (ITKDCDENKENKT) are enriched in basic and acidic residues. The short motif at 784–786 (KEN) is the KEN box 3 element. UIM domains lie at 808-827 (REEQ…QEAW) and 830-849 (KEDD…FNNS). The segment covering 813–824 (LQQALAQSLQEQ) has biased composition (low complexity). Catalysis depends on His908, which acts as the Proton acceptor.

Belongs to the peptidase C19 family. In terms of assembly, interacts with FZR1/CDH1. Interacts with CDT1. In terms of processing, polyubiquitinated via 'Lys-11'-linked ubiquitin by the APC(CDH1) complex during late mitosis, leading to its degradation. Able to mediate auto-deubiquitination. Phosphorylated at Ser-630 by CDK2 during G1/S phase but not during mitosis; phosphorylation at Ser-630 is required for deubiquitinase activity. Also polyubiquitinated during early G1 phase, without leading to degradation. Phosphorylated at Ser-114 by ATM following DNA damage, which in turn increases its deubiquitination activity towards BLM.

The protein resides in the nucleus. It is found in the chromosome. It catalyses the reaction Thiol-dependent hydrolysis of ester, thioester, amide, peptide and isopeptide bonds formed by the C-terminal Gly of ubiquitin (a 76-residue protein attached to proteins as an intracellular targeting signal).. In terms of biological role, deubiquitinase that plays a role in different processes including cell cycle regulation, DNA replication or DNA damage response. Antagonizes the anaphase-promoting complex (APC/C) during G1/S transition by mediating deubiquitination of cyclin-A (CCNA1 and CCNA2), thereby promoting S phase entry. Specifically mediates deubiquitination of 'Lys-11'-linked polyubiquitin chains, a specific ubiquitin-linkage type mediated by the APC/C complex. Phosphorylation at Ser-628 during G1/S phase maximizes the deubiquitinase activity, leading to prevent degradation of cyclin-A (CCNA1 and CCNA2). Plays an important role in the regulation of DNA replication by stabilizing the licensing factor CDT1. Also plays an essential role beyond S-phase entry to promote the efficiency and fidelity of replication by deubiquitinating checkpoint kinase 1/CHK1, promoting its stability. Sustains the DNA damage response (DDR) by deubiquitinating and stabilizing the ATP-dependent DNA helicase BLM. Mechanistically, DNA double-strand breaks (DSB) promotes ATM-mediated phosphorylation of USP37 and enhances the binding between USP37 and BLM. Promotes cell migration by deubiquitinating and stabilizing the epithelial-mesenchymal transition (EMT)-inducing transcription factor SNAI. Plays a role in the regulation of mitotic spindle assembly and mitotic progression by associating with chromatin-associated WAPL and stabilizing it through deubiquitination. The protein is Ubiquitin carboxyl-terminal hydrolase 37 (USP37) of Canis lupus familiaris (Dog).